Reading from the N-terminus, the 529-residue chain is MKYIVVTGGVMSGLGKGITTASIGRLLKNRGYQVTAVKIDPYLNIDAGTMNPAQHGEVFVLSDGGEVDLDLGNYERFLDINLKSIHNITTGKVYRNVIEKERRGDFLGATVQIIPHITDEIRYCISRAAQETVNGGKVADVCMVEVGGTVGDIESMPFLEAVRQMHGDLAPEDMILVHVTLVPMDTMGDFKTKPTQHSVKALRELGLQPDIIVARSSDVIGPQTKKKISTFTDVPVKAVVSAKDAPDIYQIPMELEKEGLADVVCSYLSLENREPDTAWYRVVSQEYTNRVTVAIVSKYGIEDVYMSIKESLKHAGRALSTEVNIRWLDAETFELHDLADVDGILIPGGFGKRGIEGKIRAIRYARENKKPYLGLCLGFQLAVIEYTRHVLGIEDATSEEMGDGTHVIAILPEQEEVSDLGGTMRLGDCDVVLKDGTKVTGLYGKTAIVERHRHRYEVNPAFIADLEAAGLVFSGTCGPRMEVCEIPNHPFYLATQFHPEFRSSPTKPSPPYIGFVEACKKNKSSSEIR.

Residues 1–270 (MKYIVVTGGV…ADVVCSYLSL (270 aa)) form an amidoligase domain region. Ser-12 provides a ligand contact to CTP. Ser-12 is a binding site for UTP. ATP-binding positions include 13–18 (GLGKGI) and Asp-70. The Mg(2+) site is built by Asp-70 and Glu-145. CTP is bound by residues 152–154 (DIE), 191–196 (KTKPTQ), and Lys-227. Residues 191-196 (KTKPTQ) and Lys-227 contribute to the UTP site. Position 243–245 (243–245 (KDA)) interacts with ATP. The Glutamine amidotransferase type-1 domain maps to 293-525 (VAIVSKYGIE…VEACKKNKSS (233 aa)). Gly-349 contributes to the L-glutamine binding site. The active-site Nucleophile; for glutamine hydrolysis is the Cys-376. L-glutamine contacts are provided by residues 377 to 380 (LGFQ), Glu-400, and Arg-455. Catalysis depends on residues His-498 and Glu-500.

This sequence belongs to the CTP synthase family. As to quaternary structure, homotetramer.

It carries out the reaction UTP + L-glutamine + ATP + H2O = CTP + L-glutamate + ADP + phosphate + 2 H(+). It catalyses the reaction L-glutamine + H2O = L-glutamate + NH4(+). The catalysed reaction is UTP + NH4(+) + ATP = CTP + ADP + phosphate + 2 H(+). It participates in pyrimidine metabolism; CTP biosynthesis via de novo pathway; CTP from UDP: step 2/2. With respect to regulation, allosterically activated by GTP, when glutamine is the substrate; GTP has no effect on the reaction when ammonia is the substrate. The allosteric effector GTP functions by stabilizing the protein conformation that binds the tetrahedral intermediate(s) formed during glutamine hydrolysis. Inhibited by the product CTP, via allosteric rather than competitive inhibition. In terms of biological role, catalyzes the ATP-dependent amination of UTP to CTP with either L-glutamine or ammonia as the source of nitrogen. Regulates intracellular CTP levels through interactions with the four ribonucleotide triphosphates. The sequence is that of CTP synthase from Methanoculleus marisnigri (strain ATCC 35101 / DSM 1498 / JR1).